Here is a 174-residue protein sequence, read N- to C-terminus: Dual-action ribosomal maturation protein DarP (174 aa).

This sequence belongs to the DarP family.

Its subcellular location is the cytoplasm. Functionally, member of a network of 50S ribosomal subunit biogenesis factors which assembles along the 30S-50S interface, preventing incorrect 23S rRNA structures from forming. Promotes peptidyl transferase center (PTC) maturation. The protein is Dual-action ribosomal maturation protein DarP of Pseudomonas aeruginosa (strain LESB58).